A 116-amino-acid chain; its full sequence is DNA polymerase epsilon subunit 4 (116 aa).

Over residues 1-10 the composition is skewed to low complexity; sequence MAAAAPGSGA. A disordered region spans residues 1 to 36; the sequence is MAAAAPGSGAAREEEGTGGDAATPQPPAPTSAPGAR.

As to quaternary structure, component of the DNA polymerase epsilon complex consisting of four subunits: the catalytic subunit POLE and the accessory subunits POLE2, POLE3 and POLE4. Interaction with POLE3 is a prerequisite for further binding with POLE and POLE2.

The protein resides in the nucleus. Its function is as follows. Accessory component of the DNA polymerase epsilon complex. Participates in DNA repair and in chromosomal DNA replication. The protein is DNA polymerase epsilon subunit 4 (POLE4) of Bos taurus (Bovine).